The sequence spans 809 residues: MSSGQSFSHSLLKLPLSALVKGTAIPSNPIDDHHIDINKPIVYALPFRSAVDLLTLQKHALELGLPDPLSPLEIHGKSLKRYVFIASRPTLVQSDNDVPSDSIALFSDLLALHAEDSELDVQVIPATVLWGRKPGKEGNNKPYLQAMNGLQKAKAVITAGRDCLVRFSPVVSLRYMAQSHGTDSSIAHKLARVARIHFSRQKLAASGPDLPSRQVLFARLMKSPAIEQAIEEEAKSKNISMEKARKEAQDIMDEIAADFSYSLVKQGDRLLGWLWNKLYQGLNINNAATVRRLAQDGHEIVYVPCHRSHMDYLLLSYVLYHEGMVPPHIAAGINLNFFPAGPIFRRGGAFFIRRSFKGNRLYSTIFREYLAELFAKGYSVEYFSEGGRSRTGRLLPAKTGMLAMTIQAMLRGLNRPVTLVPVYIGYEHVMEVATYAKELRGKRKEKENAGLVLRTLRKLRNFGLGYVNFGEPIPLNQYLNEHAPEWTKDIDPMGASRPQWINPVVNQLANKMMTHINDAAAANALTLCATALLASRQRALSKDSLIHQIECYLQLLKNVPYSKTYTVPSESAEALVEHAISLDKFVIETDTMGDIISLDRNQSILMTYYRNNIIHLFALPSLIAQMIIRQENLTVSQIQQQVAEIYPFLKAELFLSHKEEELDELVVKVLNELVSQDLISLKADKVAKNQANTLTLVLLGRTISETLQRYSIAFNLLVSNPELAKADLEQKSQDIAQRLTRLHGINAPEYFDKGVFASLFSTLKQQGYLDSDGNCDSEKTAQFATLLYALLYPEVKLTIEESVFQLKSA.

An HXXXXD motif motif is present at residues H306 to D311.

The protein belongs to the GPAT/DAPAT family.

It is found in the cell inner membrane. The enzyme catalyses sn-glycerol 3-phosphate + an acyl-CoA = a 1-acyl-sn-glycero-3-phosphate + CoA. It functions in the pathway phospholipid metabolism; CDP-diacylglycerol biosynthesis; CDP-diacylglycerol from sn-glycerol 3-phosphate: step 1/3. This is Glycerol-3-phosphate acyltransferase from Vibrio vulnificus (strain YJ016).